The primary structure comprises 313 residues: BTB/POZ domain-containing adapter for CUL3-mediated RhoA degradation protein 3 (313 aa).

M1 carries the post-translational modification N-acetylmethionine. A Phosphoserine modification is found at S23. Positions 32–100 (KYVKLNVGGA…LRDGAVPLPE (69 aa)) constitute a BTB domain. A PCNA-binding motif is present at residues 239–245 (QTKVEFP).

It belongs to the BACURD family. Homotetramer; forms a two-fold symmetric tetramer in solution. Interacts with CUL3; interaction is direct and forms a 5:5 heterodecamer. Component of the BCR(BACURD3) E3 ubiquitin ligase complex, at least composed of CUL3, KCTD10/BACURD3 and RBX1. Interacts with DNA polymerase delta subunit 2/POLD2. Interacts with PCNA.

The protein resides in the nucleus. It participates in protein modification; protein ubiquitination. Substrate-specific adapter of a BCR (BTB-CUL3-RBX1) E3 ubiquitin-protein ligase complex. The BCR(BACURD3) E3 ubiquitin ligase complex mediates the ubiquitination of target proteins, leading to their degradation by the proteasome. This is BTB/POZ domain-containing adapter for CUL3-mediated RhoA degradation protein 3 (KCTD10) from Homo sapiens (Human).